The following is a 245-amino-acid chain: Phycoerythrobilin:ferredoxin oxidoreductase (245 aa).

This sequence belongs to the HY2 family.

It carries out the reaction (3Z)-phycoerythrobilin + oxidized 2[4Fe-4S]-[ferredoxin] = 15,16-dihydrobiliverdin + reduced 2[4Fe-4S]-[ferredoxin] + 2 H(+). In terms of biological role, catalyzes the two-electron reduction of the C2 and C3(1) diene system of 15,16-dihydrobiliverdin. This is Phycoerythrobilin:ferredoxin oxidoreductase (pebB) from Gloeobacter violaceus (strain ATCC 29082 / PCC 7421).